We begin with the raw amino-acid sequence, 187 residues long: ATP synthase subunit b, chloroplastic (187 aa).

A helical transmembrane segment spans residues 34 to 56 (LINLAAVIGLLFYSGRSFLTNLL).

The protein belongs to the ATPase B chain family. As to quaternary structure, F-type ATPases have 2 components, F(1) - the catalytic core - and F(0) - the membrane proton channel. F(1) has five subunits: alpha(3), beta(3), gamma(1), delta(1), epsilon(1). F(0) has four main subunits: a(1), b(1), b'(1) and c(10-14). The alpha and beta chains form an alternating ring which encloses part of the gamma chain. F(1) is attached to F(0) by a central stalk formed by the gamma and epsilon chains, while a peripheral stalk is formed by the delta, b and b' chains.

It localises to the plastid. It is found in the chloroplast thylakoid membrane. F(1)F(0) ATP synthase produces ATP from ADP in the presence of a proton or sodium gradient. F-type ATPases consist of two structural domains, F(1) containing the extramembraneous catalytic core and F(0) containing the membrane proton channel, linked together by a central stalk and a peripheral stalk. During catalysis, ATP synthesis in the catalytic domain of F(1) is coupled via a rotary mechanism of the central stalk subunits to proton translocation. Its function is as follows. Component of the F(0) channel, it forms part of the peripheral stalk, linking F(1) to F(0). This Chlorokybus atmophyticus (Soil alga) protein is ATP synthase subunit b, chloroplastic.